Here is a 188-residue protein sequence, read N- to C-terminus: Dual specificity protein phosphatase 18 (188 aa).

One can recognise a Tyrosine-protein phosphatase domain in the interval 19-160; that stretch reads GLSQITSSLY…LIHYEFQLFG (142 aa). Positions 95 to 141 are sufficient for mitochondrial localization; the sequence is MKQGRTLLHCAAGVSRSAALCLAYLMKYHAMSLLDAHTWTKSCRPII. C104 serves as the catalytic Phosphocysteine intermediate.

This sequence belongs to the protein-tyrosine phosphatase family. Non-receptor class dual specificity subfamily.

Its subcellular location is the cytoplasm. The protein resides in the nucleus. The protein localises to the mitochondrion inner membrane. The enzyme catalyses O-phospho-L-tyrosyl-[protein] + H2O = L-tyrosyl-[protein] + phosphate. The catalysed reaction is O-phospho-L-seryl-[protein] + H2O = L-seryl-[protein] + phosphate. It catalyses the reaction O-phospho-L-threonyl-[protein] + H2O = L-threonyl-[protein] + phosphate. In terms of biological role, can dephosphorylate single and diphosphorylated synthetic MAPK peptides, with preference for the phosphotyrosine and diphosphorylated forms over phosphothreonine. In vitro, dephosphorylates p-nitrophenyl phosphate (pNPP). The polypeptide is Dual specificity protein phosphatase 18 (DUSP18) (Bos taurus (Bovine)).